A 192-amino-acid chain; its full sequence is dTTP/UTP pyrophosphatase (192 aa).

D65 (proton acceptor) is an active-site residue.

The protein belongs to the Maf family. YhdE subfamily. Requires a divalent metal cation as cofactor.

It is found in the cytoplasm. It carries out the reaction dTTP + H2O = dTMP + diphosphate + H(+). It catalyses the reaction UTP + H2O = UMP + diphosphate + H(+). In terms of biological role, nucleoside triphosphate pyrophosphatase that hydrolyzes dTTP and UTP. May have a dual role in cell division arrest and in preventing the incorporation of modified nucleotides into cellular nucleic acids. In Fusobacterium nucleatum subsp. nucleatum (strain ATCC 25586 / DSM 15643 / BCRC 10681 / CIP 101130 / JCM 8532 / KCTC 2640 / LMG 13131 / VPI 4355), this protein is dTTP/UTP pyrophosphatase.